The following is a 236-amino-acid chain: Pyridoxine 5'-phosphate synthase (236 aa).

Asparagine 6 lines the 3-amino-2-oxopropyl phosphate pocket. Residue 8 to 9 (DH) coordinates 1-deoxy-D-xylulose 5-phosphate. Arginine 17 is a binding site for 3-amino-2-oxopropyl phosphate. The active-site Proton acceptor is histidine 42. Positions 44 and 49 each coordinate 1-deoxy-D-xylulose 5-phosphate. The active-site Proton acceptor is glutamate 69. Threonine 99 is a binding site for 1-deoxy-D-xylulose 5-phosphate. Catalysis depends on histidine 190, which acts as the Proton donor. Residues glycine 191 and 212–213 (GH) each bind 3-amino-2-oxopropyl phosphate.

It belongs to the PNP synthase family. Homooctamer; tetramer of dimers.

It is found in the cytoplasm. The catalysed reaction is 3-amino-2-oxopropyl phosphate + 1-deoxy-D-xylulose 5-phosphate = pyridoxine 5'-phosphate + phosphate + 2 H2O + H(+). It functions in the pathway cofactor biosynthesis; pyridoxine 5'-phosphate biosynthesis; pyridoxine 5'-phosphate from D-erythrose 4-phosphate: step 5/5. In terms of biological role, catalyzes the complicated ring closure reaction between the two acyclic compounds 1-deoxy-D-xylulose-5-phosphate (DXP) and 3-amino-2-oxopropyl phosphate (1-amino-acetone-3-phosphate or AAP) to form pyridoxine 5'-phosphate (PNP) and inorganic phosphate. This Pelodictyon phaeoclathratiforme (strain DSM 5477 / BU-1) protein is Pyridoxine 5'-phosphate synthase.